Reading from the N-terminus, the 522-residue chain is Putative ribose/galactose/methyl galactoside import ATP-binding protein (522 aa).

ABC transporter domains follow at residues 7–244 (LEMV…VGRE) and 254–498 (PKLG…TGQA). 39-46 (GENGAGKS) serves as a coordination point for ATP.

It belongs to the ABC transporter superfamily. Carbohydrate importer 2 (CUT2) (TC 3.A.1.2) family.

The protein localises to the cell membrane. The enzyme catalyses D-ribose(out) + ATP + H2O = D-ribose(in) + ADP + phosphate + H(+). It catalyses the reaction D-galactose(out) + ATP + H2O = D-galactose(in) + ADP + phosphate + H(+). Part of an ABC transporter complex involved in carbohydrate import. Could be involved in ribose, galactose and/or methyl galactoside import. Responsible for energy coupling to the transport system. The chain is Putative ribose/galactose/methyl galactoside import ATP-binding protein from Halalkalibacterium halodurans (strain ATCC BAA-125 / DSM 18197 / FERM 7344 / JCM 9153 / C-125) (Bacillus halodurans).